Consider the following 765-residue polypeptide: Polyadenylate-binding protein, cytoplasmic and nuclear (765 aa).

The span at 1–37 shows a compositional bias: low complexity; sequence MSADASTTPAADSNVTSTPETSTTPAAPAPEVTAVES. Residues 1-49 form a disordered region; sequence MSADASTTPAADSNVTSTPETSTTPAAPAPEVTAVESTTAPNASQPHSA. Polar residues predominate over residues 38 to 48; the sequence is TTAPNASQPHS. RRM domains follow at residues 49 to 127, 137 to 214, 230 to 307, and 333 to 470; these read ASLY…WSQR, GNVF…HHIS, TNVY…RAQK, and VNLY…LAQR. Disordered regions lie at residues 364 to 427 and 619 to 657; these read VMRD…ADKK and PGYG…PEEA. Over residues 377 to 427 the composition is skewed to basic and acidic residues; that stretch reads ESDKEKENKEATKENEKESSEAEKAEKTEEKPADSGDEKKEDKESKKADKK. Residues 628–637 show a composition bias toward low complexity; sequence VPVQQGQMRP. The PABC domain maps to 659–736; sequence AGGLTAQALS…ALNVYDEYMK (78 aa). The disordered stretch occupies residues 737 to 765; that stretch reads NKGGESEATGEAAKPKEAAKETSTEENKS. Residues 749-765 are compositionally biased toward basic and acidic residues; sequence AKPKEAAKETSTEENKS.

Belongs to the polyadenylate-binding protein type-1 family.

Its subcellular location is the cytoplasm. The protein localises to the nucleus. Binds the poly(A) tail of mRNA. Appears to be an important mediator of the multiple roles of the poly(A) tail in mRNA biogenesis, stability and translation. In the nucleus, involved in both mRNA cleavage and polyadenylation. Is also required for efficient mRNA export to the cytoplasm. Acts in concert with a poly(A)-specific nuclease (PAN) to affect poly(A) tail shortening, which may occur concomitantly with either nucleocytoplasmic mRNA transport or translational initiation. In the cytoplasm, stimulates translation initiation and regulates mRNA decay through translation termination-coupled poly(A) shortening, probably mediated by PAN. This chain is Polyadenylate-binding protein, cytoplasmic and nuclear (pab1), found in Aspergillus oryzae (strain ATCC 42149 / RIB 40) (Yellow koji mold).